We begin with the raw amino-acid sequence, 107 residues long: Replication protein A 14 kDa subunit A (107 aa).

An N-acetylmethionine modification is found at M1.

It belongs to the replication factor A protein 3 family. Component of the heterotrimeric canonical replication protein A complex (RPA).

The protein resides in the nucleus. In terms of biological role, as part of the replication protein A (RPA/RP-A), a single-stranded DNA-binding heterotrimeric complex, may play an essential role in DNA replication, recombination and repair. Binds and stabilizes single-stranded DNA intermediates, preventing complementary DNA reannealing and recruiting different proteins involved in DNA metabolism. This Arabidopsis thaliana (Mouse-ear cress) protein is Replication protein A 14 kDa subunit A (RPA3A).